The sequence spans 55 residues: Large ribosomal subunit protein bL33 (55 aa).

This sequence belongs to the bacterial ribosomal protein bL33 family.

The chain is Large ribosomal subunit protein bL33 from Bartonella quintana (strain Toulouse) (Rochalimaea quintana).